Consider the following 1076-residue polypeptide: DNA-directed RNA polymerase subunit beta (1076 aa).

It belongs to the RNA polymerase beta chain family. In plastids the minimal PEP RNA polymerase catalytic core is composed of four subunits: alpha, beta, beta', and beta''. When a (nuclear-encoded) sigma factor is associated with the core the holoenzyme is formed, which can initiate transcription.

It localises to the plastid. Its subcellular location is the chloroplast. The catalysed reaction is RNA(n) + a ribonucleoside 5'-triphosphate = RNA(n+1) + diphosphate. DNA-dependent RNA polymerase catalyzes the transcription of DNA into RNA using the four ribonucleoside triphosphates as substrates. The sequence is that of DNA-directed RNA polymerase subunit beta from Lolium perenne (Perennial ryegrass).